Here is a 707-residue protein sequence, read N- to C-terminus: Elongation factor G 2 (707 aa).

Residues 8 to 290 (ERYRNIGISA…AVIDYLPSPA (283 aa)) enclose the tr-type G domain. Residues 17–24 (AHIDAGKT), 88–92 (DTPGH), and 142–145 (NKMD) contribute to the GTP site.

Belongs to the TRAFAC class translation factor GTPase superfamily. Classic translation factor GTPase family. EF-G/EF-2 subfamily.

Its subcellular location is the cytoplasm. Functionally, catalyzes the GTP-dependent ribosomal translocation step during translation elongation. During this step, the ribosome changes from the pre-translocational (PRE) to the post-translocational (POST) state as the newly formed A-site-bound peptidyl-tRNA and P-site-bound deacylated tRNA move to the P and E sites, respectively. Catalyzes the coordinated movement of the two tRNA molecules, the mRNA and conformational changes in the ribosome. The polypeptide is Elongation factor G 2 (Bordetella bronchiseptica (strain ATCC BAA-588 / NCTC 13252 / RB50) (Alcaligenes bronchisepticus)).